A 784-amino-acid chain; its full sequence is Probable phosphoketolase (784 aa).

This sequence belongs to the XFP family. Requires thiamine diphosphate as cofactor.

The chain is Probable phosphoketolase from Rhodopseudomonas palustris (strain HaA2).